The primary structure comprises 384 residues: Putative exopolyphosphatase (384 aa).

Mn(2+) is bound by residues aspartate 40, aspartate 42, aspartate 116, histidine 138, and aspartate 200.

It belongs to the PPase class C family. Mn(2+) serves as cofactor.

It catalyses the reaction [phosphate](n) + H2O = [phosphate](n-1) + phosphate + H(+). Degradation of inorganic polyphosphates. The chain is Putative exopolyphosphatase from Schizosaccharomyces pombe (strain 972 / ATCC 24843) (Fission yeast).